We begin with the raw amino-acid sequence, 498 residues long: Glycerol kinase (498 aa).

ADP is bound at residue threonine 12. ATP contacts are provided by threonine 12, threonine 13, and serine 14. Sn-glycerol 3-phosphate is bound at residue threonine 12. An ADP-binding site is contributed by arginine 16. Positions 82, 83, 134, and 243 each coordinate sn-glycerol 3-phosphate. Residues arginine 82, glutamate 83, tyrosine 134, aspartate 243, and glutamine 244 each contribute to the glycerol site. Threonine 265 and glycine 308 together coordinate ADP. The ATP site is built by threonine 265, glycine 308, glutamine 312, and glycine 409. ADP-binding residues include glycine 409 and asparagine 413.

It belongs to the FGGY kinase family. As to quaternary structure, homotetramer and homodimer (in equilibrium).

The catalysed reaction is glycerol + ATP = sn-glycerol 3-phosphate + ADP + H(+). The protein operates within polyol metabolism; glycerol degradation via glycerol kinase pathway; sn-glycerol 3-phosphate from glycerol: step 1/1. Its activity is regulated as follows. Activated by phosphorylation and inhibited by fructose 1,6-bisphosphate (FBP). Key enzyme in the regulation of glycerol uptake and metabolism. Catalyzes the phosphorylation of glycerol to yield sn-glycerol 3-phosphate. In Clostridium botulinum (strain Loch Maree / Type A3), this protein is Glycerol kinase.